Consider the following 288-residue polypeptide: 4-diphosphocytidyl-2-C-methyl-D-erythritol kinase (288 aa).

Lys-22 is an active-site residue. ATP is bound at residue 104-114 (PSQAGLGGGSS). Asp-146 is a catalytic residue.

It belongs to the GHMP kinase family. IspE subfamily.

The catalysed reaction is 4-CDP-2-C-methyl-D-erythritol + ATP = 4-CDP-2-C-methyl-D-erythritol 2-phosphate + ADP + H(+). It participates in isoprenoid biosynthesis; isopentenyl diphosphate biosynthesis via DXP pathway; isopentenyl diphosphate from 1-deoxy-D-xylulose 5-phosphate: step 3/6. In terms of biological role, catalyzes the phosphorylation of the position 2 hydroxy group of 4-diphosphocytidyl-2C-methyl-D-erythritol. This Protochlamydia amoebophila (strain UWE25) protein is 4-diphosphocytidyl-2-C-methyl-D-erythritol kinase.